A 327-amino-acid polypeptide reads, in one-letter code: Immediate early response gene 5 protein (327 aa).

Disordered stretches follow at residues 59-166 (GPAG…GVFP) and 227-313 (GPAG…DKPV). Low complexity predominate over residues 71–84 (QPGEPAAGPPAGWG). The segment covering 253 to 262 (GEDDDAEEME) has biased composition (acidic residues). Positions 265 to 278 (NVANLISIFGSSFS) are enriched in polar residues.

This sequence belongs to the IER family. Monomer. Homodimer. Associates with the catalytic subunit of protein phosphatase PP2A. Interacts (via N- and C-terminal regions) with PPP2R2B. Interacts with PPP2R2A, PPP2R2C and PPP2R2D. Interacts (via N-terminus) with RPS6KB1. Interacts (via central region) with HSF1; this interaction promotes PPP2CA-induced HSF1 dephosphorylation, leading to enhanced HSF1 transcriptional activity. As to expression, expressed in acute myeloid leukemia (AML) cells.

Its subcellular location is the nucleus. It localises to the cytoplasm. Its function is as follows. Plays a role as a transcription factor. Mediates positive transcriptional regulation of several chaperone genes during the heat shock response in a HSF1-dependent manner. Mediates negative transcriptional regulation of CDC25B expression. Plays a role in the dephosphorylation of the heat shock factor HSF1 and ribosomal protein S6 kinase (S6K) by the protein phosphatase PP2A. Involved in the regulation of cell proliferation and resistance to thermal stress. Involved in the cell cycle checkpoint and survival in response to ionizing radiation. Associates with chromatin to the CDC25B promoter. In Homo sapiens (Human), this protein is Immediate early response gene 5 protein (IER5).